The sequence spans 587 residues: Prolycopene isomerase 2, chloroplastic (587 aa).

Residues M1–V50 constitute a chloroplast transit peptide.

It belongs to the carotenoid/retinoid oxidoreductase family. CrtISO subfamily. NAD(+) is required as a cofactor. Requires NADP(+) as cofactor. The cofactor is FAD. As to expression, up-regulated in the flower buds and flower lip tissue, while it is weakly expressed in leaves.

Its subcellular location is the plastid. It localises to the chloroplast membrane. It catalyses the reaction 7,7',9,9'-tetra-cis-lycopene = all-trans-lycopene. Its pathway is carotenoid biosynthesis; lycopene biosynthesis. Functionally, carotene cis-trans-isomerase that converts 7,9,9'-tri-cis-neurosporene to 9'-cis-neurosporene and 7,9,9',7'-tetra-cis-lycopene (also known as prolycopene) into all-trans-lycopene. Isomerization requires redox-active components, suggesting that isomerization is achieved by a reversible redox reaction acting at specific double bonds. Isomerizes adjacent cis-double bonds at C7 and C9 pairwise into the trans-configuration, but is incapable of isomerizing single cis-double bonds at C9 and C9'. The chain is Prolycopene isomerase 2, chloroplastic (CRTISO2) from Oncidium hybrid cultivar (Orchid).